A 476-amino-acid chain; its full sequence is Ribulose bisphosphate carboxylase large chain (476 aa).

Positions 1–2 (MS) are excised as a propeptide. Proline 3 carries the N-acetylproline modification. Lysine 14 carries the post-translational modification N6,N6,N6-trimethyllysine. Substrate-binding residues include asparagine 123 and threonine 173. Lysine 175 acts as the Proton acceptor in catalysis. Residue lysine 177 participates in substrate binding. Mg(2+) is bound by residues lysine 201, aspartate 203, and glutamate 204. Lysine 201 is subject to N6-carboxylysine. The active-site Proton acceptor is histidine 294. Residues arginine 295, histidine 327, and serine 379 each coordinate substrate.

This sequence belongs to the RuBisCO large chain family. Type I subfamily. Heterohexadecamer of 8 large chains and 8 small chains; disulfide-linked. The disulfide link is formed within the large subunit homodimers. The cofactor is Mg(2+). Post-translationally, the disulfide bond which can form in the large chain dimeric partners within the hexadecamer appears to be associated with oxidative stress and protein turnover.

Its subcellular location is the plastid. The protein localises to the chloroplast. It carries out the reaction 2 (2R)-3-phosphoglycerate + 2 H(+) = D-ribulose 1,5-bisphosphate + CO2 + H2O. It catalyses the reaction D-ribulose 1,5-bisphosphate + O2 = 2-phosphoglycolate + (2R)-3-phosphoglycerate + 2 H(+). In terms of biological role, ruBisCO catalyzes two reactions: the carboxylation of D-ribulose 1,5-bisphosphate, the primary event in carbon dioxide fixation, as well as the oxidative fragmentation of the pentose substrate in the photorespiration process. Both reactions occur simultaneously and in competition at the same active site. This is Ribulose bisphosphate carboxylase large chain from Setaria italica (Foxtail millet).